The following is a 429-amino-acid chain: Enolase (429 aa).

(2R)-2-phosphoglycerate is bound at residue Gln163. Residue Glu205 is the Proton donor of the active site. 3 residues coordinate Mg(2+): Asp242, Glu285, and Asp312. Positions 337, 366, 367, and 388 each coordinate (2R)-2-phosphoglycerate. Residue Lys337 is the Proton acceptor of the active site.

Belongs to the enolase family. The cofactor is Mg(2+).

The protein resides in the cytoplasm. The protein localises to the secreted. Its subcellular location is the cell surface. The catalysed reaction is (2R)-2-phosphoglycerate = phosphoenolpyruvate + H2O. It participates in carbohydrate degradation; glycolysis; pyruvate from D-glyceraldehyde 3-phosphate: step 4/5. Its function is as follows. Catalyzes the reversible conversion of 2-phosphoglycerate (2-PG) into phosphoenolpyruvate (PEP). It is essential for the degradation of carbohydrates via glycolysis. The sequence is that of Enolase from Oceanobacillus iheyensis (strain DSM 14371 / CIP 107618 / JCM 11309 / KCTC 3954 / HTE831).